The following is a 367-amino-acid chain: Alanine racemase (367 aa).

Residue lysine 35 is the Proton acceptor; specific for D-alanine of the active site. At lysine 35 the chain carries N6-(pyridoxal phosphate)lysine. Arginine 130 is a substrate binding site. Tyrosine 259 functions as the Proton acceptor; specific for L-alanine in the catalytic mechanism. Substrate is bound at residue methionine 307.

This sequence belongs to the alanine racemase family. The cofactor is pyridoxal 5'-phosphate.

The catalysed reaction is L-alanine = D-alanine. The protein operates within amino-acid biosynthesis; D-alanine biosynthesis; D-alanine from L-alanine: step 1/1. In terms of biological role, catalyzes the interconversion of L-alanine and D-alanine. May also act on other amino acids. This is Alanine racemase (alr) from Delftia acidovorans (strain DSM 14801 / SPH-1).